The primary structure comprises 592 residues: Aspartate--tRNA(Asp/Asn) ligase (592 aa).

E182 contributes to the L-aspartate binding site. Residues 206–209 (QIFK) are aspartate. Residue R228 participates in L-aspartate binding. ATP contacts are provided by residues 228–230 (RDE) and Q237. H455 is a binding site for L-aspartate. E489 serves as a coordination point for ATP. R496 contacts L-aspartate. 541-544 (GLDR) is an ATP binding site.

The protein belongs to the class-II aminoacyl-tRNA synthetase family. Type 1 subfamily. As to quaternary structure, homodimer.

The protein localises to the cytoplasm. The catalysed reaction is tRNA(Asx) + L-aspartate + ATP = L-aspartyl-tRNA(Asx) + AMP + diphosphate. Its function is as follows. Aspartyl-tRNA synthetase with relaxed tRNA specificity since it is able to aspartylate not only its cognate tRNA(Asp) but also tRNA(Asn). Reaction proceeds in two steps: L-aspartate is first activated by ATP to form Asp-AMP and then transferred to the acceptor end of tRNA(Asp/Asn). The chain is Aspartate--tRNA(Asp/Asn) ligase from Caldanaerobacter subterraneus subsp. tengcongensis (strain DSM 15242 / JCM 11007 / NBRC 100824 / MB4) (Thermoanaerobacter tengcongensis).